The following is a 76-amino-acid chain: Mu-scoloptoxin(15)-Ssm1a (76 aa).

The signal sequence occupies residues 1 to 23 (MEKKIIFLVFLVALLALPGFIST). The segment at 33 to 36 (KKRK) is important for inhibition of KCNQ4. Cystine bridges form between Cys43-Cys69 and Cys47-Cys71.

This sequence belongs to the scoloptoxin-15 family. Expressed by the venom gland.

The protein resides in the secreted. Blocks voltage-gated potassium channels Kv7.4/KCNQ4 (IC(50)=2.5 uM), Kv7.1/KCNQ1 (IC(50)=2.8 uM), Kv7.2/KCNQ2 (IC(50)=2.7 uM) and Kv7.5/KCNQ5 (IC(50)=2.7 uM). Targets the pore domain, in particular negatively charged residues 'Asp-266' and 'Asp-288', of KCNQ4 and probably other KCNQ channel family members where these residues are conserved. In vivo, shows vasoconstrictive activity resulting in acute hypertension when injected intravenously in mice. Also induces coronary vasospasms ultimately leading to heart failure. Induces seizures when injected into the hippocampus of mice. Decreases respiratory rate while increasing respiratory amplitude, probably by triggering a contraction of the bronchial ring. The polypeptide is Mu-scoloptoxin(15)-Ssm1a (Scolopendra mutilans (Chinese red-headed centipede)).